Here is a 197-residue protein sequence, read N- to C-terminus: Glycerol-3-phosphate acyltransferase (197 aa).

The next 6 helical transmembrane spans lie at 1–21, 50–70, 77–97, 111–131, 136–156, and 157–177; these read MNIL…GFLI, WPAL…VKIA, GLIE…PIWL, MFLA…LIVL, FVSL…FFYL, and GNYM…VIWK.

The protein belongs to the PlsY family. Probably interacts with PlsX.

It is found in the cell inner membrane. It catalyses the reaction an acyl phosphate + sn-glycerol 3-phosphate = a 1-acyl-sn-glycero-3-phosphate + phosphate. Its pathway is lipid metabolism; phospholipid metabolism. Catalyzes the transfer of an acyl group from acyl-phosphate (acyl-PO(4)) to glycerol-3-phosphate (G3P) to form lysophosphatidic acid (LPA). This enzyme utilizes acyl-phosphate as fatty acyl donor, but not acyl-CoA or acyl-ACP. The protein is Glycerol-3-phosphate acyltransferase of Prochlorococcus marinus (strain MIT 9312).